A 414-amino-acid polypeptide reads, in one-letter code: Putative competence-damage inducible protein (414 aa).

Belongs to the CinA family.

The chain is Putative competence-damage inducible protein from Listeria monocytogenes serotype 4a (strain HCC23).